The chain runs to 321 residues: Non-canonical heme oxygenase HOZ, chloroplastic (321 aa).

Residues Met-1–Met-45 constitute a chloroplast transit peptide. Residues Cys-96–Asp-116 are dimerization. Heme b is bound by residues Ser-130, Val-134, and His-135. Dimerization stretches follow at residues Lys-144 to Asp-166 and Lys-205 to Arg-208.

In terms of assembly, homodimer. Binds to heme in the interdimer interface; the heme iron is coordinated by a fixed water molecule.

It localises to the plastid. The protein localises to the chloroplast. Dimeric beta-barrel protein binding to heme and catalyzing its degradation to produce biliverdin. May function in the tetrapyrrole biosynthetic pathway. This Arabidopsis thaliana (Mouse-ear cress) protein is Non-canonical heme oxygenase HOZ, chloroplastic.